A 365-amino-acid polypeptide reads, in one-letter code: Patr class I histocompatibility antigen, A-2 alpha chain (365 aa).

The N-terminal stretch at 1 to 24 (MAVMPPRTLLLLLSGALALTQTWA) is a signal peptide. The segment at 25 to 114 (GSHSMRYFFT…LRGYYNQSED (90 aa)) is alpha-1. The Extracellular segment spans residues 25-308 (GSHSMRYFFT…EPSSQPTIPI (284 aa)). N-linked (GlcNAc...) asparagine glycosylation occurs at Asn-110. The segment at 115-206 (GSHTIQIMYG…ENGKETLQRT (92 aa)) is alpha-2. Cystine bridges form between Cys-125–Cys-188 and Cys-227–Cys-283. The interval 207–298 (DPPKTHMTHH…GLPKPLTLRW (92 aa)) is alpha-3. The Ig-like C1-type domain occupies 209–295 (PKTHMTHHPI…QHEGLPKPLT (87 aa)). The interval 299–308 (EPSSQPTIPI) is connecting peptide. A helical transmembrane segment spans residues 309 to 332 (VGIIAGLVLLGAVITGAVVAAVMW). Residues 333–365 (RRKSSDRKGGSYTQAASSDSAQGSDVSLTACKV) lie on the Cytoplasmic side of the membrane. The segment at 339–360 (RKGGSYTQAASSDSAQGSDVSL) is disordered. Ser-343 is modified (phosphoserine). Tyr-344 is modified (phosphotyrosine). Residues 346-359 (QAASSDSAQGSDVS) show a composition bias toward low complexity. Phosphoserine occurs at positions 349, 350, 352, 356, and 359.

The protein belongs to the MHC class I family. In terms of assembly, heterodimer of an alpha chain and a beta chain (beta-2-microglobulin).

The protein localises to the membrane. Functionally, involved in the presentation of foreign antigens to the immune system. The protein is Patr class I histocompatibility antigen, A-2 alpha chain of Pan troglodytes (Chimpanzee).